Reading from the N-terminus, the 429-residue chain is MKYLRKIINWLSSLKVAIVLLILIALGSALGTALPQGEKAESYLKNYEVTRFLGVINGDLLLQLQLDHVYSSFWFLFLLTWLSFSLIICSWKRQWPSLKKAIDWIDYKEPKQIQKLAISQSFRIQKNDNGINPLANYLENNGWQVKIKSSRLAARKGLIGRVGPPLVHFGLILLIIGATYGVLKGQRLEKFLAPERSLNLLSPNGISKVSVKLTDFKIDRDPTGKPEQFRSKLELHNNNINKSIYEEISVNHPLRFQGITLYQADWSLAAITIQINNSPKIQFPLNKIDELGDQVWGIVLPQMPDSDLKPLLLTLSSEQGPVRFFSEEGNPAGIGRPNGNPILIGTSKISIIDVIPSSGILLKYDPGVPIVYLGFAISLIGSVFSIISTKQLWIIQEEESRLMHIGGLSNRNLSGFANQFNSIIKAAYD.

A run of 3 helical transmembrane segments spans residues 14–34 (LKVAIVLLILIALGSALGTAL), 72–92 (SFWFLFLLTWLSFSLIICSWK), and 162–182 (VGPPLVHFGLILLIIGATYGV).

This sequence belongs to the Ccs1/CcsB family. In terms of assembly, may interact with CcsA.

The protein resides in the cellular thylakoid membrane. Functionally, required during biogenesis of c-type cytochromes (cytochrome c6 and cytochrome f) at the step of heme attachment. This Prochlorococcus marinus (strain SARG / CCMP1375 / SS120) protein is Cytochrome c biogenesis protein CcsB.